Reading from the N-terminus, the 87-residue chain is Non-structural protein NS3 (87 aa).

Its subcellular location is the host nucleus. Plays a role in viral DNA replication. The polypeptide is Non-structural protein NS3 (Mustela (ADV)).